We begin with the raw amino-acid sequence, 161 residues long: 2-C-methyl-D-erythritol 2,4-cyclodiphosphate synthase (161 aa).

Asp11 and His13 together coordinate a divalent metal cation. 4-CDP-2-C-methyl-D-erythritol 2-phosphate is bound by residues 11 to 13 (DIH) and 37 to 38 (HS). Position 45 (His45) interacts with a divalent metal cation. 4-CDP-2-C-methyl-D-erythritol 2-phosphate is bound by residues 59–61 (DIG) and 135–138 (TTNE).

This sequence belongs to the IspF family. Homotrimer. It depends on a divalent metal cation as a cofactor.

The catalysed reaction is 4-CDP-2-C-methyl-D-erythritol 2-phosphate = 2-C-methyl-D-erythritol 2,4-cyclic diphosphate + CMP. The protein operates within isoprenoid biosynthesis; isopentenyl diphosphate biosynthesis via DXP pathway; isopentenyl diphosphate from 1-deoxy-D-xylulose 5-phosphate: step 4/6. Involved in the biosynthesis of isopentenyl diphosphate (IPP) and dimethylallyl diphosphate (DMAPP), two major building blocks of isoprenoid compounds. Catalyzes the conversion of 4-diphosphocytidyl-2-C-methyl-D-erythritol 2-phosphate (CDP-ME2P) to 2-C-methyl-D-erythritol 2,4-cyclodiphosphate (ME-CPP) with a corresponding release of cytidine 5-monophosphate (CMP). The protein is 2-C-methyl-D-erythritol 2,4-cyclodiphosphate synthase of Acaryochloris marina (strain MBIC 11017).